We begin with the raw amino-acid sequence, 309 residues long: Aspartate carbamoyltransferase catalytic subunit (309 aa).

Residues arginine 55 and threonine 56 each contribute to the carbamoyl phosphate site. Lysine 85 is a binding site for L-aspartate. Residues arginine 106, histidine 135, and glutamine 138 each contribute to the carbamoyl phosphate site. L-aspartate-binding residues include arginine 168 and arginine 230. Carbamoyl phosphate-binding residues include leucine 268 and proline 269.

It belongs to the aspartate/ornithine carbamoyltransferase superfamily. ATCase family. In terms of assembly, heterododecamer (2C3:3R2) of six catalytic PyrB chains organized as two trimers (C3), and six regulatory PyrI chains organized as three dimers (R2).

The enzyme catalyses carbamoyl phosphate + L-aspartate = N-carbamoyl-L-aspartate + phosphate + H(+). It functions in the pathway pyrimidine metabolism; UMP biosynthesis via de novo pathway; (S)-dihydroorotate from bicarbonate: step 2/3. Catalyzes the condensation of carbamoyl phosphate and aspartate to form carbamoyl aspartate and inorganic phosphate, the committed step in the de novo pyrimidine nucleotide biosynthesis pathway. In Vibrio cholerae serotype O1 (strain ATCC 39541 / Classical Ogawa 395 / O395), this protein is Aspartate carbamoyltransferase catalytic subunit.